A 288-amino-acid polypeptide reads, in one-letter code: Undecaprenyl-diphosphatase (288 aa).

8 helical membrane passes run 25–45, 53–73, 93–113, 121–141, 171–191, 196–216, 231–251, and 263–283; these read GITE…NEFL, FIDM…MVIY, WKLW…GLLL, LSNF…FIWI, VLSI…GIIV, SVAA…YSGL, GQAA…LFVI, and FTVF…YGAV.

This sequence belongs to the UppP family.

It localises to the cell membrane. The enzyme catalyses di-trans,octa-cis-undecaprenyl diphosphate + H2O = di-trans,octa-cis-undecaprenyl phosphate + phosphate + H(+). In terms of biological role, catalyzes the dephosphorylation of undecaprenyl diphosphate (UPP). Confers resistance to bacitracin. The sequence is that of Undecaprenyl-diphosphatase from Streptococcus thermophilus (strain CNRZ 1066).